A 1272-amino-acid chain; its full sequence is CST complex subunit CTC1 (1272 aa).

This sequence belongs to the CTC1 family. In terms of assembly, component of the CST complex, composed of CTC1, TEN1 and STN1. Interacts with POT1A.

The protein resides in the nucleus. Its subcellular location is the chromosome. It is found in the telomere. In terms of biological role, component of the CST complex, a complex that binds to single-stranded DNA and is required to protect telomeres from DNA degradation. The CST complex binds single-stranded DNA with high affinity in a sequence-independent manner, while isolated subunits bind DNA with low affinity by themselves. Associates with enzymatically active telomerase. The protein is CST complex subunit CTC1 of Arabidopsis thaliana (Mouse-ear cress).